The chain runs to 672 residues: Threonine--tRNA ligase (672 aa).

In terms of domain architecture, TGS spans 1–64 (MTELLKISLP…EGDAELALIT (64 aa)). The interval 257–566 (DHRKLGREMD…LIEHFAGRLP (310 aa)) is catalytic. Zn(2+) is bound by residues C362, H413, and H543.

This sequence belongs to the class-II aminoacyl-tRNA synthetase family. As to quaternary structure, homodimer. The cofactor is Zn(2+).

Its subcellular location is the cytoplasm. It carries out the reaction tRNA(Thr) + L-threonine + ATP = L-threonyl-tRNA(Thr) + AMP + diphosphate + H(+). In terms of biological role, catalyzes the attachment of threonine to tRNA(Thr) in a two-step reaction: L-threonine is first activated by ATP to form Thr-AMP and then transferred to the acceptor end of tRNA(Thr). Also edits incorrectly charged L-seryl-tRNA(Thr). The protein is Threonine--tRNA ligase of Erythrobacter litoralis (strain HTCC2594).